Reading from the N-terminus, the 182-residue chain is Alpha-S2-casein (182 aa).

Positions 1 to 15 (MKFFIFTCLLAVALA) are cleaved as a signal peptide. A phosphoserine mark is found at Ser22, Ser23, and Ser24.

The protein belongs to the alpha-casein family. As to expression, mammary gland specific. Secreted in milk.

The protein resides in the secreted. In terms of biological role, important role in the capacity of milk to transport calcium phosphate. The polypeptide is Alpha-S2-casein (CSN1S2) (Oryctolagus cuniculus (Rabbit)).